Reading from the N-terminus, the 935-residue chain is Isoleucine--tRNA ligase (935 aa).

The short motif at 58 to 68 is the 'HIGH' region element; sequence PYANGSIHVGH. E558 serves as a coordination point for L-isoleucyl-5'-AMP. A 'KMSKS' region motif is present at residues 599 to 603; the sequence is KMSKS. K602 contributes to the ATP binding site. Positions 897, 900, 917, and 920 each coordinate Zn(2+).

It belongs to the class-I aminoacyl-tRNA synthetase family. IleS type 1 subfamily. Monomer. Zn(2+) is required as a cofactor.

It localises to the cytoplasm. The catalysed reaction is tRNA(Ile) + L-isoleucine + ATP = L-isoleucyl-tRNA(Ile) + AMP + diphosphate. Its function is as follows. Catalyzes the attachment of isoleucine to tRNA(Ile). As IleRS can inadvertently accommodate and process structurally similar amino acids such as valine, to avoid such errors it has two additional distinct tRNA(Ile)-dependent editing activities. One activity is designated as 'pretransfer' editing and involves the hydrolysis of activated Val-AMP. The other activity is designated 'posttransfer' editing and involves deacylation of mischarged Val-tRNA(Ile). The chain is Isoleucine--tRNA ligase from Francisella philomiragia subsp. philomiragia (strain ATCC 25017 / CCUG 19701 / FSC 153 / O#319-036).